The sequence spans 316 residues: Pentatricopeptide repeat-containing protein At1g19525 (316 aa).

PPR repeat units follow at residues 9–43 (DILT…GLRP), 44–78 (DEKI…ELKA), 79–113 (SEEV…SDGP), 115–149 (SFEA…GHKP), 150–184 (DDKC…GIEI), and 185–219 (GVIT…GEAP).

It belongs to the PPR family. P subfamily.

In Arabidopsis thaliana (Mouse-ear cress), this protein is Pentatricopeptide repeat-containing protein At1g19525.